The following is an 81-amino-acid chain: MKAIIVFILFISSVHAMSKCNQAIYLNLDPHCGILPDCNLDGPNPSYLKRVSCERKENGKPGFIELIPGKCLHGKPRCSLK.

The N-terminal stretch at 1-16 (MKAIIVFILFISSVHA) is a signal peptide.

As to expression, main cells of accessory gland and seminal fluid.

The protein localises to the secreted. Its function is as follows. Responsible for physiological and behavioral changes in mated female flies. This is Accessory gland protein Acp63F (Acp63F) from Drosophila melanogaster (Fruit fly).